Reading from the N-terminus, the 297-residue chain is Calponin-1 (297 aa).

One can recognise a Calponin-homology (CH) domain in the interval 28-131 (HQREQELREW…STLLALASMA (104 aa)). 3 Calponin-like repeats span residues 164-189 (IGLQ…RHLY), 204-229 (ISLQ…RQIF), and 243-268 (VSLQ…RQVY). Threonine 170 bears the Phosphothreonine; by ROCK2 mark. Position 175 is a phosphoserine; by ROCK2 (serine 175). A phosphothreonine; by ROCK2 mark is found at threonine 180 and threonine 184. Threonine 259 carries the post-translational modification Phosphothreonine; by ROCK2.

Belongs to the calponin family. Part of cGMP kinase signaling complex at least composed of ACTA2/alpha-actin, CNN1/calponin H1, PLN/phospholamban, PRKG1 and ITPR1. Smooth muscle, and tissues containing significant amounts of smooth muscle.

Thin filament-associated protein that is implicated in the regulation and modulation of smooth muscle contraction. It is capable of binding to actin, calmodulin and tropomyosin. The interaction of calponin with actin inhibits the actomyosin Mg-ATPase activity. This chain is Calponin-1 (Cnn1), found in Mus musculus (Mouse).